Consider the following 502-residue polypeptide: Ubiquitin-like-specific protease 1A (502 aa).

Residues His393, Asp410, and Cys461 contribute to the active site.

This sequence belongs to the peptidase C48 family.

In terms of biological role, protease that catalyzes two essential functions in the SUMO pathway: processing of full-length SUMOs to their mature forms and deconjugation of SUMO from targeted proteins. Cleaves precursors of SUM1 and SUM2, and very inefficiently of SUM3. Seems to be the only ULP1 able to cleave SUM3 precursors. Cleaves SUMO peptides better than SUMO-conjugated proteins. This chain is Ubiquitin-like-specific protease 1A (ULP1A), found in Arabidopsis thaliana (Mouse-ear cress).